The primary structure comprises 482 residues: Signal recognition particle protein (482 aa).

GTP-binding positions include 107–114, 189–193, and 247–250; these read GLQGTGKT, DTAGR, and TKLD. Disordered regions lie at residues 380–413 and 452–482; these read MTTE…TDVS and FGGQ…FGQL. Residues 452-468 show a composition bias toward gly residues; the sequence is FGGQPGPGFRGYRGGGG. Residues 469–482 are compositionally biased toward basic residues; sequence KPKKKKKKKGFGQL.

The protein belongs to the GTP-binding SRP family. SRP54 subfamily. As to quaternary structure, part of the signal recognition particle protein translocation system, which is composed of SRP and FtsY.

It localises to the cytoplasm. It carries out the reaction GTP + H2O = GDP + phosphate + H(+). Functionally, involved in targeting and insertion of nascent membrane proteins into the cytoplasmic membrane. Binds to the hydrophobic signal sequence of the ribosome-nascent chain (RNC) as it emerges from the ribosomes. The SRP-RNC complex is then targeted to the cytoplasmic membrane where it interacts with the SRP receptor FtsY. The sequence is that of Signal recognition particle protein from Synechocystis sp. (strain ATCC 27184 / PCC 6803 / Kazusa).